Here is a 287-residue protein sequence, read N- to C-terminus: Transmembrane protein 71 (287 aa).

The segment at 1-25 is disordered; that stretch reads MYRDSPLMSTPVANDSRSDEGPSGK. 2 helical membrane-spanning segments follow: residues 218–238 and 244–264; these read AGLM…LVIS and FVGG…IAYV.

This sequence belongs to the TMEM71 family.

It is found in the membrane. In Mus musculus (Mouse), this protein is Transmembrane protein 71 (Tmem71).